The primary structure comprises 287 residues: Lipoyl synthase (287 aa).

Cysteine 34, cysteine 39, cysteine 45, cysteine 60, cysteine 64, cysteine 67, and serine 273 together coordinate [4Fe-4S] cluster. The region spanning 46-262 (WNKRHATVMI…KYIAYSKGFL (217 aa)) is the Radical SAM core domain.

This sequence belongs to the radical SAM superfamily. Lipoyl synthase family. [4Fe-4S] cluster is required as a cofactor.

The protein resides in the cytoplasm. It catalyses the reaction [[Fe-S] cluster scaffold protein carrying a second [4Fe-4S](2+) cluster] + N(6)-octanoyl-L-lysyl-[protein] + 2 oxidized [2Fe-2S]-[ferredoxin] + 2 S-adenosyl-L-methionine + 4 H(+) = [[Fe-S] cluster scaffold protein] + N(6)-[(R)-dihydrolipoyl]-L-lysyl-[protein] + 4 Fe(3+) + 2 hydrogen sulfide + 2 5'-deoxyadenosine + 2 L-methionine + 2 reduced [2Fe-2S]-[ferredoxin]. It participates in protein modification; protein lipoylation via endogenous pathway; protein N(6)-(lipoyl)lysine from octanoyl-[acyl-carrier-protein]: step 2/2. Catalyzes the radical-mediated insertion of two sulfur atoms into the C-6 and C-8 positions of the octanoyl moiety bound to the lipoyl domains of lipoate-dependent enzymes, thereby converting the octanoylated domains into lipoylated derivatives. In Wolbachia sp. subsp. Brugia malayi (strain TRS), this protein is Lipoyl synthase.